Consider the following 140-residue polypeptide: Pro-Viral epidermal growth factor (140 aa).

Positions 1–18 (MSMKYLMLLFAAMIIRSF) are cleaved as a signal peptide. Residues 19 to 100 (ADSGNAIETT…SENPNTTTSY (82 aa)) lie on the Extracellular side of the membrane. N-linked (GlcNAc...) asparagine; by host glycosylation occurs at Asn34. The region spanning 41–81 (AIRLCGPEGDGYCLHGDCIHARDIDGMYCRCSHGYTGIRCQ) is the EGF-like domain. 3 disulfides stabilise this stretch: Cys45–Cys58, Cys53–Cys69, and Cys71–Cys80. An N-linked (GlcNAc...) asparagine; by host glycan is attached at Asn95. The chain crosses the membrane as a helical span at residues 101–121 (IPSPGIMLVLVGIIIITCCLL). Topologically, residues 122–140 (SVYRFTRRTKLPIQDMVVP) are cytoplasmic.

It belongs to the orthopoxvirus OPG019 family. As to quaternary structure, viral epidermal growth factor interacts with host EGFR and promotes EGFR dimerization. Cleaved at the cell surface by host ADAM10, thereby releasing the secreted form of VGF.

It is found in the host membrane. The protein resides in the secreted. Its function is as follows. Stimulates cellular proliferation (hyperplasia)and mobility around infected cells to promote rapid and efficient spread of infection. This effect is beneficial for virus replication in vivo, because poxviruses replicate possibly better in proliferating cells than in quiescent cells. Acts by binding host EGFR, inducing its dimerization, autophosphorylation and leading to activation of several cellular pathways regulating cell proliferation or cell survival. The activation by host EGFR of mitogen activated protein kinases (MAPK) and extracellular-signal regulated kinases (ERK) are essential for the positive effect of vaccinia growth factor on poxvirus virulence in vivo. The polypeptide is Pro-Viral epidermal growth factor (OPG019) (Bos taurus (Bovine)).